A 251-amino-acid chain; its full sequence is Imidazole glycerol phosphate synthase subunit HisF (251 aa).

Catalysis depends on residues D11 and D130.

The protein belongs to the HisA/HisF family. In terms of assembly, heterodimer of HisH and HisF.

It is found in the cytoplasm. It carries out the reaction 5-[(5-phospho-1-deoxy-D-ribulos-1-ylimino)methylamino]-1-(5-phospho-beta-D-ribosyl)imidazole-4-carboxamide + L-glutamine = D-erythro-1-(imidazol-4-yl)glycerol 3-phosphate + 5-amino-1-(5-phospho-beta-D-ribosyl)imidazole-4-carboxamide + L-glutamate + H(+). It participates in amino-acid biosynthesis; L-histidine biosynthesis; L-histidine from 5-phospho-alpha-D-ribose 1-diphosphate: step 5/9. In terms of biological role, IGPS catalyzes the conversion of PRFAR and glutamine to IGP, AICAR and glutamate. The HisF subunit catalyzes the cyclization activity that produces IGP and AICAR from PRFAR using the ammonia provided by the HisH subunit. This chain is Imidazole glycerol phosphate synthase subunit HisF, found in Flavobacterium johnsoniae (strain ATCC 17061 / DSM 2064 / JCM 8514 / BCRC 14874 / CCUG 350202 / NBRC 14942 / NCIMB 11054 / UW101) (Cytophaga johnsonae).